Here is a 359-residue protein sequence, read N- to C-terminus: 4-dedimethylamino-4-oxo-anhydrotetracycline transaminase OxyQ (359 aa).

Residues Gly32, Lys92, and Asn155 each contribute to the substrate site. Pyridoxal 5'-phosphate is bound by residues 91–92 (TK), Asn155, Tyr186, and 216–218 (SLS). N6-(pyridoxal phosphate)lysine is present on Lys219. Arg227 provides a ligand contact to pyridoxal 5'-phosphate. Arg341 is a binding site for substrate.

It belongs to the class-I pyridoxal-phosphate-dependent aminotransferase family. The cofactor is pyridoxal 5'-phosphate.

The protein operates within antibiotic biosynthesis; oxytetracycline biosynthesis. In terms of biological role, involved in the biosynthesis of the tetracycline antibiotic, oxytetracycline. Catalyzes the conversion of 4-dedimethylamino-4-oxoanhydrotetracycline to yield 4-amino-4-de(dimethylamino)anhydrotetracycline (4-amino-ATC). In Streptomyces rimosus, this protein is 4-dedimethylamino-4-oxo-anhydrotetracycline transaminase OxyQ.